A 235-amino-acid chain; its full sequence is NAD(P)H-hydrate epimerase (235 aa).

The region spanning 18 to 221 is the YjeF N-terminal domain; it reads AAQIDEQLFT…SLVDEHELLM (204 aa). 65 to 69 is a binding site for (6S)-NADPHX; it reads NNGGD. The K(+) site is built by N66 and D127. Residues 131–137 and D160 each bind (6S)-NADPHX; that span reads GFSFHPP. S163 contributes to the K(+) binding site.

This sequence belongs to the NnrE/AIBP family. The cofactor is K(+).

The catalysed reaction is (6R)-NADHX = (6S)-NADHX. The enzyme catalyses (6R)-NADPHX = (6S)-NADPHX. Catalyzes the epimerization of the S- and R-forms of NAD(P)HX, a damaged form of NAD(P)H that is a result of enzymatic or heat-dependent hydration. This is a prerequisite for the S-specific NAD(P)H-hydrate dehydratase to allow the repair of both epimers of NAD(P)HX. The chain is NAD(P)H-hydrate epimerase from Caenorhabditis elegans.